The following is a 148-amino-acid chain: uncharacterized protein (148 aa).

Residues 55–148 form a disordered region; it reads KMRCGESGAG…RNQGQLYPQP (94 aa). Polar residues predominate over residues 68–104; that stretch reads RSNSAEVSSSQPALASKSQSKWGPTSNNPRGALTTTE.

This is an uncharacterized protein from Homo sapiens (Human).